We begin with the raw amino-acid sequence, 254 residues long: Imidazole glycerol phosphate synthase subunit HisF (254 aa).

Catalysis depends on residues Asp14 and Asp133.

The protein belongs to the HisA/HisF family. In terms of assembly, heterodimer of HisH and HisF.

The protein localises to the cytoplasm. It catalyses the reaction 5-[(5-phospho-1-deoxy-D-ribulos-1-ylimino)methylamino]-1-(5-phospho-beta-D-ribosyl)imidazole-4-carboxamide + L-glutamine = D-erythro-1-(imidazol-4-yl)glycerol 3-phosphate + 5-amino-1-(5-phospho-beta-D-ribosyl)imidazole-4-carboxamide + L-glutamate + H(+). It functions in the pathway amino-acid biosynthesis; L-histidine biosynthesis; L-histidine from 5-phospho-alpha-D-ribose 1-diphosphate: step 5/9. Functionally, IGPS catalyzes the conversion of PRFAR and glutamine to IGP, AICAR and glutamate. The HisF subunit catalyzes the cyclization activity that produces IGP and AICAR from PRFAR using the ammonia provided by the HisH subunit. This is Imidazole glycerol phosphate synthase subunit HisF from Nitratiruptor sp. (strain SB155-2).